The following is a 159-amino-acid chain: SsrA-binding protein (159 aa).

The protein belongs to the SmpB family.

The protein localises to the cytoplasm. In terms of biological role, required for rescue of stalled ribosomes mediated by trans-translation. Binds to transfer-messenger RNA (tmRNA), required for stable association of tmRNA with ribosomes. tmRNA and SmpB together mimic tRNA shape, replacing the anticodon stem-loop with SmpB. tmRNA is encoded by the ssrA gene; the 2 termini fold to resemble tRNA(Ala) and it encodes a 'tag peptide', a short internal open reading frame. During trans-translation Ala-aminoacylated tmRNA acts like a tRNA, entering the A-site of stalled ribosomes, displacing the stalled mRNA. The ribosome then switches to translate the ORF on the tmRNA; the nascent peptide is terminated with the 'tag peptide' encoded by the tmRNA and targeted for degradation. The ribosome is freed to recommence translation, which seems to be the essential function of trans-translation. This Salinispora tropica (strain ATCC BAA-916 / DSM 44818 / JCM 13857 / NBRC 105044 / CNB-440) protein is SsrA-binding protein.